Here is a 254-residue protein sequence, read N- to C-terminus: 3-deoxy-manno-octulosonate cytidylyltransferase (254 aa).

This sequence belongs to the KdsB family.

It localises to the cytoplasm. The catalysed reaction is 3-deoxy-alpha-D-manno-oct-2-ulosonate + CTP = CMP-3-deoxy-beta-D-manno-octulosonate + diphosphate. The protein operates within nucleotide-sugar biosynthesis; CMP-3-deoxy-D-manno-octulosonate biosynthesis; CMP-3-deoxy-D-manno-octulosonate from 3-deoxy-D-manno-octulosonate and CTP: step 1/1. It participates in bacterial outer membrane biogenesis; lipopolysaccharide biosynthesis. Its function is as follows. Activates KDO (a required 8-carbon sugar) for incorporation into bacterial lipopolysaccharide in Gram-negative bacteria. This chain is 3-deoxy-manno-octulosonate cytidylyltransferase, found in Chlamydia trachomatis serovar L2 (strain ATCC VR-902B / DSM 19102 / 434/Bu).